A 64-amino-acid chain; its full sequence is Large ribosomal subunit protein bL32 (64 aa).

This sequence belongs to the bacterial ribosomal protein bL32 family.

The sequence is that of Large ribosomal subunit protein bL32 from Bifidobacterium longum (strain DJO10A).